A 101-amino-acid polypeptide reads, in one-letter code: Protein RALF-like 14 (101 aa).

The first 21 residues, 1-21 (MKLLIFAVIISVVLFPVLVSS), serve as a signal peptide directing secretion. Positions 22–56 (RTIKCDQLSGKCINGEEKEIMNMRLGLDVSSRRIL) are cleaved as a propeptide — removed in mature form. C90 and C96 are disulfide-bonded.

It belongs to the plant rapid alkalinization factor (RALF) family. In terms of processing, proteolytically cleaved, probably by S1P, a subtilisin-like serine protease (subtilase).

The protein localises to the secreted. Functionally, cell signaling peptide that may regulate plant stress, growth, and development. Mediates a rapid alkalinization of extracellular space by mediating a transient increase in the cytoplasmic Ca(2+) concentration leading to a calcium-dependent signaling events through a cell surface receptor and a concomitant activation of some intracellular mitogen-activated protein kinases. This is Protein RALF-like 14 (RALFL14) from Arabidopsis thaliana (Mouse-ear cress).